The following is a 311-amino-acid chain: Dihydroorotate dehydrogenase A (fumarate) (311 aa).

Residues S19 and 43–44 (KS) each bind FMN. Residues K43, 67-71 (NSMGL), and N127 contribute to the substrate site. N127 contributes to the FMN binding site. C130 acts as the Nucleophile in catalysis. The FMN site is built by K164 and V192. 193-194 (NS) provides a ligand contact to substrate. Residues G221, 249–250 (GG), and 271–272 (GT) each bind FMN.

This sequence belongs to the dihydroorotate dehydrogenase family. Type 1 subfamily. In terms of assembly, homodimer. The cofactor is FMN.

The protein resides in the cytoplasm. It carries out the reaction (S)-dihydroorotate + fumarate = orotate + succinate. It functions in the pathway pyrimidine metabolism; UMP biosynthesis via de novo pathway. In terms of biological role, catalyzes the conversion of dihydroorotate to orotate with fumarate as the electron acceptor. This Lactococcus lactis subsp. lactis (strain IL1403) (Streptococcus lactis) protein is Dihydroorotate dehydrogenase A (fumarate) (pyrDA).